Here is a 717-residue protein sequence, read N- to C-terminus: CRISPR-associated protein Cas8b (717 aa).

2 disordered regions span residues 263–283 (IGVFSVKHPDAQPGLRQDQSW) and 698–717 (HEKEDEDDQDTEEPAESTTN). The segment covering 701 to 717 (EDEDDQDTEEPAESTTN) has biased composition (acidic residues).

It is found in the cytoplasm. Functionally, CRISPR (clustered regularly interspaced short palindromic repeat) is an adaptive immune system that provides protection against mobile genetic elements (viruses, transposable elements and conjugative plasmids). CRISPR clusters contain sequences complementary to antecedent mobile elements and target invading nucleic acids. CRISPR clusters are transcribed and processed into CRISPR RNA (crRNA). Plasmid targeted by CRISPR locus P1 transform wild-type cells very poorly. This subunit might be involved in stabilizing crRNA. This Haloferax volcanii (strain ATCC 29605 / DSM 3757 / JCM 8879 / NBRC 14742 / NCIMB 2012 / VKM B-1768 / DS2) (Halobacterium volcanii) protein is CRISPR-associated protein Cas8b.